Reading from the N-terminus, the 152-residue chain is UPF0225 protein YchJ (152 aa).

This sequence belongs to the UPF0225 family.

This Escherichia coli O17:K52:H18 (strain UMN026 / ExPEC) protein is UPF0225 protein YchJ.